We begin with the raw amino-acid sequence, 196 residues long: MNEAVSPGALSTLFTDARTHNGWRETPVSDETLRELYALMKWGPTSANCSPARIVFIRTAEGKERLRPALSSGNLQKTLTAPVTAIVAWDSEFYERLPQLFPHGDARSWFTSSPQLAEETAFRNSSMQAAYLIIACRALGLDTGPMSGFDRQHVDDAFFAGSTLKSNLLINIGYGDSSKLFARLPRLSFEEACGLL.

Belongs to the nitroreductase family. HadB/RutE subfamily. FMN serves as cofactor.

The catalysed reaction is 3-hydroxypropanoate + NADP(+) = 3-oxopropanoate + NADPH + H(+). Functionally, may reduce toxic product malonic semialdehyde to 3-hydroxypropionic acid, which is excreted. In Escherichia coli O157:H7, this protein is Probable malonic semialdehyde reductase RutE.